Reading from the N-terminus, the 85-residue chain is Putative membrane protein insertion efficiency factor (85 aa).

It belongs to the UPF0161 family.

The protein localises to the cell membrane. Its function is as follows. Could be involved in insertion of integral membrane proteins into the membrane. The sequence is that of Putative membrane protein insertion efficiency factor from Leifsonia xyli subsp. xyli (strain CTCB07).